The chain runs to 362 residues: 2-oxoglutarate-dependent dioxygenase lolO2 (362 aa).

The Fe2OG dioxygenase domain occupies 199 to 312 (TWNYFLGQPV…RYSLVFFGHL (114 aa)). Fe cation contacts are provided by histidine 222, aspartate 224, and histidine 280. Arginine 303 contacts 2-oxoglutarate.

The protein belongs to the iron/ascorbate-dependent oxidoreductase family. Fe(2+) serves as cofactor.

The protein operates within alkaloid biosynthesis. In terms of biological role, 2-oxoglutarate-dependent dioxygenase; part of the gene cluster that mediates the biosynthesis of loline alkaloids, potent insecticidal agents composed of a pyrrolizidine ring system and an uncommon ether bridge linking carbons 2 and 7. Lolines are structurally differentiated by the various modifications of the L-amino group and include norloline, loline, N-methylloline, N-acetylloline, N-acetylnorloline, and N-formylloline. The first committed step is the condensation of O-acetyl-L-homoserine (derived from L-aspartic acid) and L-proline, probably catalyzed by the gamma-type pyridoxal 5'-phosphate(PLP)-dependent enzyme lolC, to give the diamino diacid, NACPP. Ensuing cyclization, decarboxylation, and acetylation steps yield 1-exo-acetamidopyrrolizidine (AcAP). LolO is required for installation of the ether bridge upon the pathway intermediate, 1-exo-acetamidopyrrolizidine (AcAP). In sequential 2-oxoglutarate- and O(2)-consuming steps, lolO removes hydrogens from C2 and C7 of AcAP to form both carbon-oxygen bonds in N-acetylnorloline (NANL), the precursor to all other lolines. The enzymes lolD, lolE, lolF and lolT have also been proposed to be involved in the ether-bridge installation. Further processing of the exocyclic moiety of NANL by fungal N-acetamidase (LolN), methyltransferase (LolM), and cytochrome P450 (LolP) enzymes, with occasional involvement of a plant acetyltransferase, generates the other known lolines. LolN transforms NANL to norlonine which is monomethylated and dimethylated to respectively lonine and N-methyllonine (NML) by lolM. LolP catalyzes hydroxylation of the methyl group in N-methylloline (NML) and further oxygenation to N-formylloline (NFL). A plant acetyltransferase is responsible for the acetylation of loline to form N-acetylloline (NAL). LolA might interact with aspartate kinase to prevent feedback inhibition of its activity by these end products and thereby promote production of L-homoserine from L-aspartate. The sequence is that of 2-oxoglutarate-dependent dioxygenase lolO2 from Epichloe uncinata (Endophyte fungus).